The chain runs to 460 residues: Signal recognition particle 54 kDa protein (460 aa).

Residues 104 to 111, 184 to 188, and 242 to 245 each bind GTP; these read GLQGSGKT, DTAGR, and TKLD.

This sequence belongs to the GTP-binding SRP family. SRP54 subfamily. As to quaternary structure, part of the signal recognition particle protein translocation system, which is composed of SRP and FtsY. Archaeal SRP consists of a 7S RNA molecule of 300 nucleotides and two protein subunits: SRP54 and SRP19.

It localises to the cytoplasm. It catalyses the reaction GTP + H2O = GDP + phosphate + H(+). In terms of biological role, involved in targeting and insertion of nascent membrane proteins into the cytoplasmic membrane. Binds to the hydrophobic signal sequence of the ribosome-nascent chain (RNC) as it emerges from the ribosomes. The SRP-RNC complex is then targeted to the cytoplasmic membrane where it interacts with the SRP receptor FtsY. This chain is Signal recognition particle 54 kDa protein, found in Halobacterium salinarum (strain ATCC 29341 / DSM 671 / R1).